The primary structure comprises 179 residues: MAQFSESVDVPDMGRRQFMNLLTFGTVTGVALGALYPVVNYFIPPAAGGAGGGTTAKDELGNDVSVSKFLESHNVGDRTLVQGLKGDPTYIVVESKEAITDYGINAVCTHLGCVVPWNAAENKFKCPCHGSQYDATGKVVRGPAPKSLALSHAKTENDKIVLTSWTETDFRTGEEPWWS.

Residues 21-43 (LLTFGTVTGVALGALYPVVNYFI) form a helical membrane-spanning segment. Residues 61-162 (GNDVSVSKFL…AKTENDKIVL (102 aa)) enclose the Rieske domain. Positions 108, 110, 126, and 129 each coordinate [2Fe-2S] cluster. The cysteines at positions 113 and 128 are disulfide-linked.

The protein belongs to the Rieske iron-sulfur protein family. As to quaternary structure, the 4 large subunits of the cytochrome b6-f complex are cytochrome b6, subunit IV (17 kDa polypeptide, PetD), cytochrome f and the Rieske protein, while the 4 small subunits are PetG, PetL, PetM and PetN. The complex functions as a dimer. [2Fe-2S] cluster is required as a cofactor.

Its subcellular location is the cellular thylakoid membrane. The enzyme catalyses 2 oxidized [plastocyanin] + a plastoquinol + 2 H(+)(in) = 2 reduced [plastocyanin] + a plastoquinone + 4 H(+)(out). Functionally, component of the cytochrome b6-f complex, which mediates electron transfer between photosystem II (PSII) and photosystem I (PSI), cyclic electron flow around PSI, and state transitions. The sequence is that of Cytochrome b6-f complex iron-sulfur subunit 1 from Nostoc sp. (strain PCC 7120 / SAG 25.82 / UTEX 2576).